We begin with the raw amino-acid sequence, 3401 residues long: Genome polyprotein (3401 aa).

Residues 1-104 (MPVRPRNKPK…GRKKRRSMTH (104 aa)) lie on the Cytoplasmic side of the membrane. Residues 101-117 (SMTHGIILSLGVTMVIG) constitute a propeptide, ER anchor for the capsid protein C, removed in mature form by serine protease NS3. The helical transmembrane segment at 105–125 (GIILSLGVTMVIGASLHHHGG) threads the bilayer. Over 126–240 (RYLLNVTHAD…GERQIQRIER (115 aa)) the chain is Extracellular. Residues Asn-130 and Asn-146 are each glycosylated (N-linked (GlcNAc...) asparagine; by host). A helical membrane pass occupies residues 241 to 261 (WMMRNPFYAAISLLLAWWVGS). At 262–266 (DIKQK) the chain is on the cytoplasmic side. Residues 267 to 281 (VLIAFLVLAIGPAYS) traverse the membrane as a helical segment. The Extracellular portion of the chain corresponds to 282–725 (THCVGIPKRD…HTVFGNVFHS (444 aa)). 5 cysteine pairs are disulfide-bonded: Cys-284-Cys-311, Cys-355-Cys-386, Cys-373-Cys-397, Cys-462-Cys-564, and Cys-581-Cys-611. The tract at residues 379 to 392 (DRGWGNGCGLFGKG) is fusion peptide. Residues 726–746 (IFGGLSWITKIILGGMFLWLG) form a helical membrane-spanning segment. Residues 747 to 753 (VNSRNQT) are Extracellular-facing. A helical membrane pass occupies residues 754–774 (MCMVLMAVGGILLFMTLGVSG). Topologically, residues 775–1122 (EVGCSLDIKR…NVHEEHLVRS (348 aa)) are extracellular. Cystine bridges form between Cys-778–Cys-789, Cys-829–Cys-916, Cys-952–Cys-997, Cys-1054–Cys-1103, Cys-1065–Cys-1087, and Cys-1086–Cys-1090. N-linked (GlcNAc...) asparagine; by host glycans are attached at residues Asn-904 and Asn-981. Residues 1123–1143 (WASAGTGMAESSLGLVALFLF) traverse the membrane as a helical segment. Residues 1144-1198 (TDIFARKRMTRKFMVIGCLGVLSVMIVGGFTALDLIRYIIVVGQHFASMNHGGDV) lie on the Cytoplasmic side of the membrane. Residues 1199–1219 (AYLAIIAVGKLRPGLLMMYSF) traverse the membrane as a helical segment. Residues 1220-1287 (KAAWSPKERV…PILALLTPLS (68 aa)) are Lumenal-facing. A helical transmembrane segment spans residues 1288–1308 (MEIIRKTGIFACVGLLGLSLW). Topologically, residues 1309-1352 (RGGDTTMRKGMPLLAGAATAASGLTRASLSVVFILCATAASRRS) are cytoplasmic. The helical transmembrane segment at 1353 to 1373 (WPIGEIMAIVGIVGTGFGMAV) threads the bilayer. Over 1374-1376 (NDQ) the chain is Lumenal. Residues 1377-1397 (ASLAGPMLVFGLIMIVYATLG) traverse the membrane as a helical segment. The Cytoplasmic segment spans residues 1398–1447 (RADGLTLKRVGDITWEEEAVHSGSSTRYDVTLNEAGEFKLVHEEPVVWSH). Residues 1404–1443 (LKRVGDITWEEEAVHSGSSTRYDVTLNEAGEFKLVHEEPV) form an interacts with and activates NS3 protease region. The helical intramembrane region spans 1448 to 1468 (VVFLVVALIAASVHPIALVVV). Residues 1469 to 2154 (TIIWTYGKKH…ASTNAPEAVT (686 aa)) are Cytoplasmic-facing. Residues 1481–1661 (GGVLWDIPIA…GGEGVTEEPL (181 aa)) form the Peptidase S7 domain. Active-site charge relay system; for serine protease NS3 activity residues include His-1532, Asp-1556, and Ser-1617. Residues 1665–1821 (ATMLRKGKLT…ESNGEIEDLR (157 aa)) enclose the Helicase ATP-binding domain. Residues 1669 to 1672 (RKGK) are important for RNA-binding. 1678 to 1685 (YHPGAGKT) contributes to the ATP binding site. The DEAH box motif lies at 1769–1772 (DEAH). Residues 1816–1995 (EIEDLRRDIP…GMVAPLYDVE (180 aa)) form the Helicase C-terminal domain. A helical transmembrane segment spans residues 2155 to 2175 (ILLMTGIVVACTLGVGLAFMW). The Lumenal portion of the chain corresponds to 2176–2181 (PKGVDK). Residues 2182–2200 (MSMGMITMSIAGYLMLQGG) constitute an intramembrane region (helical). Leu-2201 is a topological domain (lumenal). A helical membrane pass occupies residues 2202–2222 (TPVQVASVLLIFFIFMVVLIP). The Cytoplasmic portion of the chain corresponds to 2223-2235 (EAGTQRSINDNKT). Residues 2236-2250 (LYVLLGVALLIGAIT) form a helical membrane-spanning segment. Residues 2251 to 2285 (ANEMGYLEKTKRDLLGERVQNEWKLELPMFDLRPG) lie on the Cytoplasmic side of the membrane. The helical intramembrane region spans 2286–2306 (AAWSIYVGLATLVMPVLDHWI). The Lumenal portion of the chain corresponds to 2307-2354 (RTEYGSLSLTGIAQQASILQAMDKGVPFFKLNMSVIVLLVSVWNNFSM). Residues 2355–2375 (LSVLCGVGLLGVHCAFVLPGL) form a helical membrane-spanning segment. Over 2376 to 2418 (RAQAAKQAQRRVYHGVAKNPVVDGQTTAEIETAPEMPPLYEKK) the chain is Cytoplasmic. A helical transmembrane segment spans residues 2419 to 2439 (LALVLLGVVAIANGVMVRSAF). Residues 2440–2467 (SMAETVVLLSAAVGPLLEGNTSAIWNGP) lie on the Lumenal side of the membrane. The chain crosses the membrane as a helical span at residues 2468–2488 (MAVAMAGIMRGNYYAGIGLAY). Over 2489 to 3401 (NLWILQSPKR…YSVQEVGTVL (913 aa)) the chain is Cytoplasmic. An mRNA cap 0-1 NS5-type MT domain is found at 2499–2763 (GRSTTMTLGE…DVVFPTGTRN (265 aa)). Ser-2554 is a binding site for S-adenosyl-L-methionine. At Ser-2554 the chain carries Phosphoserine. Lys-2559 acts as the For 2'-O-MTase activity in catalysis. Positions 2584, 2585, 2602, 2603, 2629, and 2630 each coordinate S-adenosyl-L-methionine. Asp-2644 serves as the catalytic For 2'-O-MTase activity. Residue Ile-2645 coordinates S-adenosyl-L-methionine. Active-site for 2'-O-MTase activity residues include Lys-2680 and Glu-2716. Position 2718 (Tyr-2718) interacts with S-adenosyl-L-methionine. A Nuclear localization signal motif is present at residues 2869 to 2902 (RAIMEVVNKWMFDFLAREKAPRICTKEEFINKVR). Residues Glu-2936, His-2940, Cys-2945, and Cys-2948 each coordinate Zn(2+). One can recognise a RdRp catalytic domain in the interval 3026–3178 (GIMYADDTAG…APLDERFGLA (153 aa)). The Zn(2+) site is built by His-3213, Cys-3229, and Cys-3348.

In the N-terminal section; belongs to the class I-like SAM-binding methyltransferase superfamily. mRNA cap 0-1 NS5-type methyltransferase family. Homodimer. Interacts (via N-terminus) with host EXOC1 (via C-terminus); this interaction results in EXOC1 degradation through the proteasome degradation pathway. In terms of assembly, forms heterodimers with envelope protein E in the endoplasmic reticulum and Golgi. As to quaternary structure, homodimer; in the endoplasmic reticulum and Golgi. Interacts with protein prM. Interacts with non-structural protein 1. Homodimer; Homohexamer when secreted. Interacts with envelope protein E. NS1 interacts with NS4B. Interacts with host complement protein CFH; this interaction leads to the degradation of C3. In terms of assembly, interacts (via N-terminus) with serine protease NS3. As to quaternary structure, forms a heterodimer with serine protease NS3. May form homooligomers. Forms a heterodimer with NS2B. Interacts with non-structural protein 2A (via N-terminus). Interacts with NS4B. Interacts with unphosphorylated RNA-directed RNA polymerase NS5; this interaction stimulates RNA-directed RNA polymerase NS5 guanylyltransferase activity. NS3 interacts with host PDCD6IP; this interaction contributes to virion release. In terms of assembly, interacts with serine protease NS3. As to quaternary structure, homodimer. Interacts with host STAT2; this interaction prevents the establishment of cellular antiviral state. Interacts with serine protease NS3. Interacts with host TRIM23; this interaction leads to NS5 ubiquitination. In terms of processing, specific enzymatic cleavages in vivo yield mature proteins. The nascent capsid protein C contains a C-terminal hydrophobic domain that act as a signal sequence for translocation of prM into the lumen of the ER. Mature capsid protein C is cleaved at a site upstream of this hydrophobic domain by NS3. prM is cleaved in post-Golgi vesicles by a host furin, releasing the mature small envelope protein M, and peptide pr. Non-structural protein 2A-alpha, a C-terminally truncated form of non-structural protein 2A, results from partial cleavage by NS3. Specific enzymatic cleavages in vivo yield mature proteins peptide 2K acts as a signal sequence and is removed from the N-terminus of NS4B by the host signal peptidase in the ER lumen. Signal cleavage at the 2K-4B site requires a prior NS3 protease-mediated cleavage at the 4A-2K site. Post-translationally, cleaved in post-Golgi vesicles by a host furin, releasing the mature small envelope protein M, and peptide pr. This cleavage is incomplete as up to 30% of viral particles still carry uncleaved prM. N-glycosylated. In terms of processing, N-glycosylated. The excreted form is glycosylated and this is required for efficient secretion of the protein from infected cells. Post-translationally, polyubiquitinated; ubiquitination is probably mediated by host TRIM23 and is prerequisite for NS5-STAT2 interaction. NS5 is not ISGylated or sumoylated. Phosphorylated on serines residues. This phosphorylation may trigger NS5 nuclear localization.

It is found in the virion. The protein resides in the host nucleus. It localises to the host cytoplasm. The protein localises to the host perinuclear region. Its subcellular location is the virion membrane. It is found in the host endoplasmic reticulum membrane. The protein resides in the secreted. It carries out the reaction Selective hydrolysis of -Xaa-Xaa-|-Yaa- bonds in which each of the Xaa can be either Arg or Lys and Yaa can be either Ser or Ala.. The enzyme catalyses RNA(n) + a ribonucleoside 5'-triphosphate = RNA(n+1) + diphosphate. It catalyses the reaction a ribonucleoside 5'-triphosphate + H2O = a ribonucleoside 5'-diphosphate + phosphate + H(+). The catalysed reaction is ATP + H2O = ADP + phosphate + H(+). It carries out the reaction a 5'-end (5'-triphosphoguanosine)-ribonucleoside in mRNA + S-adenosyl-L-methionine = a 5'-end (N(7)-methyl 5'-triphosphoguanosine)-ribonucleoside in mRNA + S-adenosyl-L-homocysteine. The enzyme catalyses a 5'-end (N(7)-methyl 5'-triphosphoguanosine)-ribonucleoside in mRNA + S-adenosyl-L-methionine = a 5'-end (N(7)-methyl 5'-triphosphoguanosine)-(2'-O-methyl-ribonucleoside) in mRNA + S-adenosyl-L-homocysteine + H(+). Functionally, plays a role in virus budding by binding to the cell membrane and gathering the viral RNA into a nucleocapsid that forms the core of a mature virus particle. During virus entry, may induce genome penetration into the host cytoplasm after hemifusion induced by the surface proteins. Can migrate to the cell nucleus where it modulates host functions. In terms of biological role, inhibits RNA silencing by interfering with host Dicer. Its function is as follows. Prevents premature fusion activity of envelope proteins in trans-Golgi by binding to envelope protein E at pH6.0. After virion release in extracellular space, gets dissociated from E dimers. Acts as a chaperone for envelope protein E during intracellular virion assembly by masking and inactivating envelope protein E fusion peptide. prM is the only viral peptide matured by host furin in the trans-Golgi network probably to avoid catastrophic activation of the viral fusion activity in acidic Golgi compartment prior to virion release. prM-E cleavage is inefficient, and many virions are only partially matured. These uncleaved prM would play a role in immune evasion. Functionally, may play a role in virus budding. Exerts cytotoxic effects by activating a mitochondrial apoptotic pathway through M ectodomain. May display a viroporin activity. In terms of biological role, binds to host cell surface receptor and mediates fusion between viral and cellular membranes. Envelope protein is synthesized in the endoplasmic reticulum in the form of heterodimer with protein prM. They play a role in virion budding in the ER, and the newly formed immature particle is covered with 60 spikes composed of heterodimer between precursor prM and envelope protein E. The virion is transported to the Golgi apparatus where the low pH causes dissociation of PrM-E heterodimers and formation of E homodimers. prM-E cleavage is inefficient, and many virions are only partially matured. These uncleaved prM would play a role in immune evasion. Its function is as follows. Involved in immune evasion, pathogenesis and viral replication. Once cleaved off the polyprotein, is targeted to three destinations: the viral replication cycle, the plasma membrane and the extracellular compartment. Essential for viral replication. Required for formation of the replication complex and recruitment of other non-structural proteins to the ER-derived membrane structures. Excreted as a hexameric lipoparticle that plays a role against host immune response. Antagonizing the complement function. Binds to the host macrophages and dendritic cells. Inhibits signal transduction originating from Toll-like receptor 3 (TLR3). Component of the viral RNA replication complex that functions in virion assembly and antagonizes the host immune response. Functionally, required cofactor for the serine protease function of NS3. May have membrane-destabilizing activity and form viroporins. In terms of biological role, displays three enzymatic activities: serine protease, NTPase and RNA helicase. NS3 serine protease, in association with NS2B, performs its autocleavage and cleaves the polyprotein at dibasic sites in the cytoplasm: C-prM, NS2A-NS2B, NS2B-NS3, NS3-NS4A, NS4A-2K and NS4B-NS5. NS3 RNA helicase binds RNA and unwinds dsRNA in the 3' to 5' direction. Also plays a role in virus assembly. Its function is as follows. Regulates the ATPase activity of the NS3 helicase activity. NS4A allows NS3 helicase to conserve energy during unwinding. Functions as a signal peptide for NS4B and is required for the interferon antagonism activity of the latter. Functionally, induces the formation of ER-derived membrane vesicles where the viral replication takes place. Inhibits interferon (IFN)-induced host STAT1 phosphorylation and nuclear translocation, thereby preventing the establishment of cellular antiviral state by blocking the IFN-alpha/beta pathway. In terms of biological role, replicates the viral (+) and (-) RNA genome, and performs the capping of genomes in the cytoplasm. NS5 methylates viral RNA cap at guanine N-7 and ribose 2'-O positions. Besides its role in RNA genome replication, also prevents the establishment of cellular antiviral state by blocking the interferon-alpha/beta (IFN-alpha/beta) signaling pathway. IFN-I induces binding of NS5 to host IFN-activated transcription factor STAT2, preventing its transcriptional activity. Host TRIM23 is the E3 ligase that interacts with and polyubiquitinates NS5 to promote its binding to STAT2 and trigger IFN-I signaling inhibition. This Edge Hill virus (EHV) protein is Genome polyprotein.